An 857-amino-acid chain; its full sequence is Envelope glycoprotein B (857 aa).

Residues 1–21 (MTRRRVLSVVVLLAALACRLG) form the signal peptide. Over 22-732 (AQTPEQPAPP…SGFISFFKNP (711 aa)) the chain is Virion surface. Disulfide bonds link cysteine 51–cysteine 528, cysteine 68–cysteine 484, cysteine 141–cysteine 206, cysteine 295–cysteine 342, and cysteine 551–cysteine 588. N-linked (GlcNAc...) asparagine; by host glycosylation occurs at asparagine 76. The tract at residues 108-114 (IYNGWYA) is involved in fusion and/or binding to host membrane. An N-linked (GlcNAc...) asparagine; by host glycan is attached at asparagine 163. The involved in fusion and/or binding to host membrane stretch occupies residues 192 to 200 (GWLIWTYRT). N-linked (GlcNAc...) asparagine; by host glycans are attached at residues asparagine 290, asparagine 329, asparagine 348, and asparagine 395. Residues 398–453 (ELTTPTSSPPSSPSPPAPSAARGSTPAAVLRRRRRDAGNATTPVPPTAPGKSLGTL) form a disordered region. The segment covering 404–415 (SSPPSSPSPPAP) has biased composition (pro residues). Residues 416 to 425 (SAARGSTPAA) show a composition bias toward low complexity. N-linked (GlcNAc...) asparagine; by host glycans are attached at residues asparagine 436, asparagine 563, and asparagine 629. The segment at 561-620 (FINDTKTYEGQLGTDNEIFLTKKMTEVCQATSQYYFQSGNEIHVYNDYHHFKTIELDGIA) is oligomerization. Hydrophobic membrane proximal region stretches follow at residues 678–730 (LDNA…SFFK) and 709–729 (NLVSTVGGLFSSLVSGFISFF). The helical transmembrane segment at 733–753 (FGGMLILVLVAGVVILVISLT) threads the bilayer. At 754-857 (RRTRQMSQQP…ALLGEAETEF (104 aa)) the chain is on the intravirion side. The disordered stretch occupies residues 832–857 (FPGLRRRRYHDPETAAALLGEAETEF). A compositionally biased stretch (low complexity) spans 845-857 (TAAALLGEAETEF).

Belongs to the herpesviridae glycoprotein B family. In terms of assembly, homotrimer; disulfide-linked. Binds to heparan sulfate proteoglycans. Interacts with gH/gL heterodimer. A proteolytic cleavage by host furin generates two subunits that remain linked by disulfide bonds.

The protein resides in the virion membrane. Its subcellular location is the host cell membrane. It is found in the host endosome membrane. The protein localises to the host Golgi apparatus membrane. Envelope glycoprotein that forms spikes at the surface of virion envelope. Essential for the initial attachment to heparan sulfate moieties of the host cell surface proteoglycans. Involved in fusion of viral and cellular membranes leading to virus entry into the host cell. Following initial binding to its host receptors, membrane fusion is mediated by the fusion machinery composed at least of gB and the heterodimer gH/gL. May be involved in the fusion between the virion envelope and the outer nuclear membrane during virion egress. The polypeptide is Envelope glycoprotein B (Epstein-Barr virus (strain B95-8) (HHV-4)).